A 42-amino-acid polypeptide reads, in one-letter code: uncharacterized protein (42 aa).

Residues 10–30 (VANWVTVILMALAGYAVLALA) form a helical membrane-spanning segment.

It is found in the host membrane. This is an uncharacterized protein from Acinetobacter calcoaceticus (Arthrobacter siderocapsulatus).